The sequence spans 410 residues: Argininosuccinate synthase (410 aa).

ATP is bound by residues 13-21 (AYSGGLDTS) and A40. L-citrulline is bound by residues Y91 and S96. Residue G121 coordinates ATP. Residues T123, N127, and D128 each coordinate L-aspartate. N127 contributes to the L-citrulline binding site. Positions 131, 182, 191, 267, and 279 each coordinate L-citrulline.

This sequence belongs to the argininosuccinate synthase family. Type 1 subfamily. In terms of assembly, homotetramer.

It is found in the cytoplasm. It carries out the reaction L-citrulline + L-aspartate + ATP = 2-(N(omega)-L-arginino)succinate + AMP + diphosphate + H(+). It functions in the pathway amino-acid biosynthesis; L-arginine biosynthesis; L-arginine from L-ornithine and carbamoyl phosphate: step 2/3. This chain is Argininosuccinate synthase, found in Gluconobacter oxydans (strain 621H) (Gluconobacter suboxydans).